We begin with the raw amino-acid sequence, 1462 residues long: Nuclear pore complex protein Nup153 (1462 aa).

Copy 1 of the repeat occupies 237-238 (FG). The 29 X 2 AA repeats of F-G stretch occupies residues 237–1405 (FGTLSTSLGN…NNPSGVFTFG (1169 aa)). Residue Lys-354 forms a Glycyl lysine isopeptide (Lys-Gly) (interchain with G-Cter in SUMO2) linkage. Repeat 2 spans residues 648 to 649 (YG). The RanBP2-type 1 zinc-finger motif lies at 653–683 (KAGSSWQCDTCLLQNKVTDNKCIACQAAKLP). Zn(2+) contacts are provided by Cys-660, Cys-663, Cys-674, and Cys-677. Repeat unit 3 spans residues 710 to 711 (FG). The RanBP2-type 2 zinc-finger motif lies at 717–746 (AIGTWDCDTCLVQNKPEAVKCVACETPKPG). The Zn(2+) site is built by Cys-723, Cys-726, Cys-737, and Cys-740. The stretch at 778–779 (FG) is repeat 4. 2 consecutive RanBP2-type zinc fingers follow at residues 785–814 (PVGS…EKPG) and 842–871 (PEGS…AKPG). Cys-791, Cys-794, Cys-805, Cys-808, Cys-848, Cys-851, Cys-862, and Cys-865 together coordinate Zn(2+). 25 consecutive repeat copies span residues 894 to 895 (FG), 915 to 916 (FG), 950 to 951 (FG), 972 to 973 (FG), 989 to 990 (FG), 1013 to 1014 (FG), 1073 to 1074 (FG), 1107 to 1108 (FG), 1124 to 1125 (FG), 1161 to 1162 (FG), 1200 to 1201 (FG), 1216 to 1217 (FG), 1228 to 1229 (FG), 1263 to 1264 (FG), 1276 to 1277 (FT), 1278 to 1279 (FG), 1293 to 1294 (FG), 1306 to 1307 (FG), 1314 to 1315 (FG), 1328 to 1329 (FG), 1350 to 1351 (FG), 1362 to 1363 (FG), 1371 to 1372 (FG), 1384 to 1385 (FG), and 1404 to 1405 (FG).

This sequence belongs to the NUP153 family. Part of the nuclear pore complex (NPC). Interacts with TPR (via coiled coil region); the interaction is direct and provides a link between the core structure and the TPR-containing nuclear basket of the nuclear pore complex (NPC). Interacts with HIKESHI. Interacts with SENP2. Interacts with XPO5. Interacts with RAN; the interaction occurs in a GTP- and GDP-independent manner. Interacts with MCM3AP; this interaction is required for MCM3AP localization at the nuclear pore complex. Interacts with MAPK1. It depends on Zn(2+) as a cofactor.

The protein localises to the nucleus. The protein resides in the nucleus membrane. It is found in the nuclear pore complex. Its subcellular location is the nucleoplasm. Component of the nuclear pore complex (NPC), a complex required for the trafficking across the nuclear envelope. Functions as a scaffolding element in the nuclear phase of the NPC essential for normal nucleocytoplasmic transport of proteins and mRNAs. Involved in the quality control and retention of unspliced mRNAs in the nucleus; in association with TPR, regulates the nuclear export of unspliced mRNA species bearing constitutive transport element (CTE) in a NXF1- and KHDRBS1-independent manner. Mediates TPR anchoring to the nuclear membrane at NPC. The repeat-containing domain may be involved in anchoring other components of the NPC to the pore membrane. Possible DNA-binding subunit of the nuclear pore complex (NPC). The chain is Nuclear pore complex protein Nup153 (Nup153) from Mus musculus (Mouse).